The chain runs to 574 residues: Proline--tRNA ligase (574 aa).

The protein belongs to the class-II aminoacyl-tRNA synthetase family. ProS type 1 subfamily. In terms of assembly, homodimer.

The protein localises to the cytoplasm. The catalysed reaction is tRNA(Pro) + L-proline + ATP = L-prolyl-tRNA(Pro) + AMP + diphosphate. Functionally, catalyzes the attachment of proline to tRNA(Pro) in a two-step reaction: proline is first activated by ATP to form Pro-AMP and then transferred to the acceptor end of tRNA(Pro). As ProRS can inadvertently accommodate and process non-cognate amino acids such as alanine and cysteine, to avoid such errors it has two additional distinct editing activities against alanine. One activity is designated as 'pretransfer' editing and involves the tRNA(Pro)-independent hydrolysis of activated Ala-AMP. The other activity is designated 'posttransfer' editing and involves deacylation of mischarged Ala-tRNA(Pro). The misacylated Cys-tRNA(Pro) is not edited by ProRS. The sequence is that of Proline--tRNA ligase from Teredinibacter turnerae (strain ATCC 39867 / T7901).